Reading from the N-terminus, the 343-residue chain is ATP-dependent (S)-NAD(P)H-hydrate dehydratase (343 aa).

Residues 1–42 constitute a mitochondrion transit peptide; the sequence is MAVHACGAAAAVVALLSAAIALQWSPLYAVLQRALSLHTAHA. A YjeF C-terminal domain is found at 49 to 340; the sequence is LFQLVRNIVP…TEVGTAFSRL (292 aa). Lys63 carries the N6-acetyllysine modification. Residue Tyr81 is modified to Phosphotyrosine. (6S)-NADPHX is bound by residues Gly149 and 202–208; that span reads NHVEFSR. Ser216 is modified (phosphoserine). ATP is bound by residues 242 to 246 and 261 to 270; these read KGEQD and GSSRRCGGQG. Asp271 contacts (6S)-NADPHX.

The protein belongs to the NnrD/CARKD family. Mg(2+) is required as a cofactor.

It localises to the mitochondrion. The enzyme catalyses (6S)-NADHX + ATP = ADP + phosphate + NADH + H(+). It catalyses the reaction (6S)-NADPHX + ATP = ADP + phosphate + NADPH + H(+). Its function is as follows. Catalyzes the dehydration of the S-form of NAD(P)HX at the expense of ATP, which is converted to ADP. Together with NAD(P)HX epimerase, which catalyzes the epimerization of the S- and R-forms, the enzyme allows the repair of both epimers of NAD(P)HX, a damaged form of NAD(P)H that is a result of enzymatic or heat-dependent hydration. In Mus musculus (Mouse), this protein is ATP-dependent (S)-NAD(P)H-hydrate dehydratase.